The primary structure comprises 360 residues: UDP-N-acetylglucosamine--N-acetylmuramyl-(pentapeptide) pyrophosphoryl-undecaprenol N-acetylglucosamine transferase (360 aa).

UDP-N-acetyl-alpha-D-glucosamine contacts are provided by residues Thr-15–Gly-17, Asn-124, Arg-165, Ser-191, and Gln-285.

This sequence belongs to the glycosyltransferase 28 family. MurG subfamily.

The protein localises to the cell inner membrane. It carries out the reaction di-trans,octa-cis-undecaprenyl diphospho-N-acetyl-alpha-D-muramoyl-L-alanyl-D-glutamyl-meso-2,6-diaminopimeloyl-D-alanyl-D-alanine + UDP-N-acetyl-alpha-D-glucosamine = di-trans,octa-cis-undecaprenyl diphospho-[N-acetyl-alpha-D-glucosaminyl-(1-&gt;4)]-N-acetyl-alpha-D-muramoyl-L-alanyl-D-glutamyl-meso-2,6-diaminopimeloyl-D-alanyl-D-alanine + UDP + H(+). Its pathway is cell wall biogenesis; peptidoglycan biosynthesis. Functionally, cell wall formation. Catalyzes the transfer of a GlcNAc subunit on undecaprenyl-pyrophosphoryl-MurNAc-pentapeptide (lipid intermediate I) to form undecaprenyl-pyrophosphoryl-MurNAc-(pentapeptide)GlcNAc (lipid intermediate II). This Gloeothece citriformis (strain PCC 7424) (Cyanothece sp. (strain PCC 7424)) protein is UDP-N-acetylglucosamine--N-acetylmuramyl-(pentapeptide) pyrophosphoryl-undecaprenol N-acetylglucosamine transferase.